A 286-amino-acid chain; its full sequence is Formamidopyrimidine-DNA glycosylase (286 aa).

Pro-2 acts as the Schiff-base intermediate with DNA in catalysis. The active-site Proton donor is the Glu-3. Catalysis depends on Lys-61, which acts as the Proton donor; for beta-elimination activity. Residues His-103, Arg-122, and Arg-164 each contribute to the DNA site. Residues 250–284 (NAYGQTGEPCGRCGTQIVRENFMNRGSHYCPNCQK) form an FPG-type zinc finger. Arg-274 acts as the Proton donor; for delta-elimination activity in catalysis.

The protein belongs to the FPG family. Monomer. Zn(2+) is required as a cofactor.

It catalyses the reaction Hydrolysis of DNA containing ring-opened 7-methylguanine residues, releasing 2,6-diamino-4-hydroxy-5-(N-methyl)formamidopyrimidine.. The enzyme catalyses 2'-deoxyribonucleotide-(2'-deoxyribose 5'-phosphate)-2'-deoxyribonucleotide-DNA = a 3'-end 2'-deoxyribonucleotide-(2,3-dehydro-2,3-deoxyribose 5'-phosphate)-DNA + a 5'-end 5'-phospho-2'-deoxyribonucleoside-DNA + H(+). Involved in base excision repair of DNA damaged by oxidation or by mutagenic agents. Acts as a DNA glycosylase that recognizes and removes damaged bases. Has a preference for oxidized purines, such as 7,8-dihydro-8-oxoguanine (8-oxoG). Has AP (apurinic/apyrimidinic) lyase activity and introduces nicks in the DNA strand. Cleaves the DNA backbone by beta-delta elimination to generate a single-strand break at the site of the removed base with both 3'- and 5'-phosphates. This Corynebacterium glutamicum (strain R) protein is Formamidopyrimidine-DNA glycosylase.